A 406-amino-acid polypeptide reads, in one-letter code: Vacuole membrane protein 1 (406 aa).

The segment covering 1 to 20 (MAENGKNCDQRRIAMSKDQH) has biased composition (basic and acidic residues). Positions 1 to 37 (MAENGKNCDQRRIAMSKDQHNGSLTDPSSVHEKKRRD) are disordered. N-acetylalanine is present on Ala-2. Residues 2–77 (AENGKNCDQR…WTSKLWHRQS (76 aa)) are Cytoplasmic-facing. Residues 78 to 98 (IVVSFLLLLAALVATYYVEGA) traverse the membrane as a helical segment. Residues 99–109 (HQQYVQRIEKQ) lie on the Extracellular side of the membrane. Residues 110–130 (FLLYAYWIGLGILSSVGLGTG) form a helical membrane-spanning segment. The Cytoplasmic segment spans residues 131-250 (LHTFLLYLGP…ASRAKLAVQK (120 aa)). Positions 173–316 (GAEGAISLWS…FVIVTFSKHI (144 aa)) are VTT domain. The helical transmembrane segment at 251–271 (LVQKVGFFGILACASIPNPLF) threads the bilayer. Topologically, residues 272–273 (DL) are extracellular. Residues 274-294 (AGITCGHFLVPFWTFFGATLI) form a helical membrane-spanning segment. The Cytoplasmic segment spans residues 295–305 (GKAIIKMHIQK). A helical transmembrane segment spans residues 306–326 (IFVIVTFSKHIVEQMVTFIGA). At 327-363 (VPGIGPSLQKPFQEYLEAQRQKLHHRSEAGTPQGENW) the chain is on the extracellular side. A helical transmembrane segment spans residues 364–384 (LSWMFEKLVVAMVCYFVLSII). The Cytoplasmic segment spans residues 385–406 (NSMAQNYAKRIQQRLNSEEKTK).

It belongs to the VMP1 family. In terms of assembly, interacts with BECN1. Interacts with TJP1. Interacts with TP53INP2. Interacts with TMEM41B. Interacts with ATP2A2, PLN and SLN; competes with PLN and SLN to prevent them from forming an inhibitory complex with ATP2A2. Interacts with ATG2A.

Its subcellular location is the endoplasmic reticulum-Golgi intermediate compartment membrane. The protein localises to the cell membrane. The protein resides in the vacuole membrane. It is found in the endoplasmic reticulum membrane. The catalysed reaction is a 1,2-diacyl-sn-glycero-3-phospho-L-serine(in) = a 1,2-diacyl-sn-glycero-3-phospho-L-serine(out). The enzyme catalyses cholesterol(in) = cholesterol(out). It carries out the reaction a 1,2-diacyl-sn-glycero-3-phosphocholine(in) = a 1,2-diacyl-sn-glycero-3-phosphocholine(out). It catalyses the reaction a 1,2-diacyl-sn-glycero-3-phosphoethanolamine(in) = a 1,2-diacyl-sn-glycero-3-phosphoethanolamine(out). Phospholipid scramblase involved in lipid homeostasis and membrane dynamics processes. Has phospholipid scramblase activity toward cholesterol and phosphatidylserine, as well as phosphatidylethanolamine and phosphatidylcholine. Required for autophagosome formation: participates in early stages of autophagosome biogenesis at the endoplasmic reticulum (ER) membrane by reequilibrating the leaflets of the ER as lipids are extracted by ATG2 (ATG2A or ATG2B) to mediate autophagosome assembly. Regulates ATP2A2 activity to control ER-isolation membrane contacts for autophagosome formation. In addition to autophagy, involved in other processes in which phospholipid scramblase activity is required. Modulates ER contacts with lipid droplets, mitochondria and endosomes. Plays an essential role in formation of cell junctions. Upon stress such as bacterial and viral infection, promotes formation of cytoplasmic vacuoles followed by cell death. Involved in the cytoplasmic vacuolization of acinar cells during the early stage of acute pancreatitis. The chain is Vacuole membrane protein 1 from Mus musculus (Mouse).